A 431-amino-acid chain; its full sequence is uncharacterized protein (431 aa).

The next 4 membrane-spanning stretches (helical) occupy residues 228–248 (GLLS…HYLS), 279–299 (IGLP…NFTF), 349–369 (ILWP…FLWI), and 388–408 (MIFN…LKLY).

The protein resides in the membrane. This is an uncharacterized protein from Saccharomyces cerevisiae (strain ATCC 204508 / S288c) (Baker's yeast).